Reading from the N-terminus, the 186-residue chain is Tumor necrosis factor alpha-induced protein 8-like protein 1 (186 aa).

It belongs to the TNFAIP8 family. In terms of assembly, interacts with FBXW5; TNFAIP8L1 competes with TSC2 to bind FBXW5 increasing TSC2 stability by preventing its ubiquitination. As to expression, high expression detected in most carcinoma cell lines, especially in cells transformed with virus genomes.

The protein localises to the cytoplasm. Functionally, acts as a negative regulator of mTOR activity. This chain is Tumor necrosis factor alpha-induced protein 8-like protein 1 (TNFAIP8L1), found in Homo sapiens (Human).